The sequence spans 120 residues: NAD(P)H-quinone oxidoreductase subunit 3, chloroplastic (120 aa).

The next 3 membrane-spanning stretches (helical) occupy residues 9-29 (IFWA…FISG), 64-84 (MFAL…PWAM), and 88-108 (VLGV…IVGL).

The protein belongs to the complex I subunit 3 family. NDH is composed of at least 16 different subunits, 5 of which are encoded in the nucleus.

The protein resides in the plastid. It localises to the chloroplast thylakoid membrane. It carries out the reaction a plastoquinone + NADH + (n+1) H(+)(in) = a plastoquinol + NAD(+) + n H(+)(out). The enzyme catalyses a plastoquinone + NADPH + (n+1) H(+)(in) = a plastoquinol + NADP(+) + n H(+)(out). In terms of biological role, NDH shuttles electrons from NAD(P)H:plastoquinone, via FMN and iron-sulfur (Fe-S) centers, to quinones in the photosynthetic chain and possibly in a chloroplast respiratory chain. The immediate electron acceptor for the enzyme in this species is believed to be plastoquinone. Couples the redox reaction to proton translocation, and thus conserves the redox energy in a proton gradient. The sequence is that of NAD(P)H-quinone oxidoreductase subunit 3, chloroplastic from Guizotia abyssinica (Niger).